Consider the following 118-residue polypeptide: Large ribosomal subunit protein bL20 (118 aa).

Belongs to the bacterial ribosomal protein bL20 family.

Its function is as follows. Binds directly to 23S ribosomal RNA and is necessary for the in vitro assembly process of the 50S ribosomal subunit. It is not involved in the protein synthesizing functions of that subunit. In Trichormus variabilis (strain ATCC 29413 / PCC 7937) (Anabaena variabilis), this protein is Large ribosomal subunit protein bL20.